Reading from the N-terminus, the 127-residue chain is Large ribosomal subunit protein bL12 (127 aa).

It belongs to the bacterial ribosomal protein bL12 family. Homodimer. Part of the ribosomal stalk of the 50S ribosomal subunit. Forms a multimeric L10(L12)X complex, where L10 forms an elongated spine to which 2 to 4 L12 dimers bind in a sequential fashion. Binds GTP-bound translation factors.

In terms of biological role, forms part of the ribosomal stalk which helps the ribosome interact with GTP-bound translation factors. Is thus essential for accurate translation. The sequence is that of Large ribosomal subunit protein bL12 from Streptomyces griseus subsp. griseus (strain JCM 4626 / CBS 651.72 / NBRC 13350 / KCC S-0626 / ISP 5235).